A 149-amino-acid polypeptide reads, in one-letter code: Large ribosomal subunit protein bL9 (149 aa).

The protein belongs to the bacterial ribosomal protein bL9 family.

In terms of biological role, binds to the 23S rRNA. The protein is Large ribosomal subunit protein bL9 of Leptospira borgpetersenii serovar Hardjo-bovis (strain JB197).